Consider the following 409-residue polypeptide: Putative competence-damage inducible protein (409 aa).

The protein belongs to the CinA family.

This Clostridium botulinum (strain ATCC 19397 / Type A) protein is Putative competence-damage inducible protein.